Consider the following 222-residue polypeptide: Large ribosomal subunit protein bL25 (222 aa).

The protein belongs to the bacterial ribosomal protein bL25 family. CTC subfamily. As to quaternary structure, part of the 50S ribosomal subunit; part of the 5S rRNA/L5/L18/L25 subcomplex. Contacts the 5S rRNA. Binds to the 5S rRNA independently of L5 and L18.

In terms of biological role, this is one of the proteins that binds to the 5S RNA in the ribosome where it forms part of the central protuberance. The chain is Large ribosomal subunit protein bL25 from Ruthia magnifica subsp. Calyptogena magnifica.